Reading from the N-terminus, the 120-residue chain is Chaperonin GroEL (120 aa).

23-27 (DGTTT) contributes to the ATP binding site.

It belongs to the chaperonin (HSP60) family. In terms of assembly, forms a cylinder of 14 subunits composed of two heptameric rings stacked back-to-back. Interacts with the co-chaperonin GroES.

Its subcellular location is the cytoplasm. The catalysed reaction is ATP + H2O + a folded polypeptide = ADP + phosphate + an unfolded polypeptide.. Its function is as follows. Together with its co-chaperonin GroES, plays an essential role in assisting protein folding. The GroEL-GroES system forms a nano-cage that allows encapsulation of the non-native substrate proteins and provides a physical environment optimized to promote and accelerate protein folding. This is Chaperonin GroEL from Mycobacterium asiaticum.